Here is a 205-residue protein sequence, read N- to C-terminus: Regulator of G-protein signaling 4 (205 aa).

S-palmitoyl cysteine attachment occurs at residues Cys-2, Cys-12, and Cys-95. In terms of domain architecture, RGS spans 62 to 178 (SLENLISHEC…LKSRFYLDLV (117 aa)).

Post-translationally, palmitoylated on Cys-2 and/or Cys-12. Phosphorylated by cyclic GMP-dependent protein kinase.

Its function is as follows. Inhibits signal transduction by increasing the GTPase activity of G protein alpha subunits thereby driving them into their inactive GDP-bound form. Activity on G(z)-alpha is inhibited by phosphorylation of the G-protein. Activity on G(z)-alpha and G(i)-alpha-1 is inhibited by palmitoylation of the G-protein. This Pongo abelii (Sumatran orangutan) protein is Regulator of G-protein signaling 4 (RGS4).